Here is an 81-residue protein sequence, read N- to C-terminus: Large ribosomal subunit protein bL27 (81 aa).

Positions 1-22 are disordered; the sequence is MAHKKGQGSSRNGRDSNAQRRG.

The protein belongs to the bacterial ribosomal protein bL27 family.

The chain is Large ribosomal subunit protein bL27 from Rhodopirellula baltica (strain DSM 10527 / NCIMB 13988 / SH1).